Reading from the N-terminus, the 340-residue chain is Mitochondrial distribution and morphology protein 12 (340 aa).

The SMP-LTD domain maps to 1-321 (MSIDLDWDGM…WPSWIKVSME (321 aa)). 3 disordered regions span residues 79–107 (HYLP…TNPI), 161–184 (SVRE…EDRE), and 319–340 (SMED…EDEH). Over residues 89–106 (QRRSAPSTPHIHTNTTNP) the composition is skewed to polar residues. Residues 321-340 (EDEDSDDEEGEEEGDQEDEH) are compositionally biased toward acidic residues.

Belongs to the MDM12 family. As to quaternary structure, component of the ER-mitochondria encounter structure (ERMES) or MDM complex, composed of MMM1, MDM10, MDM12 and MDM34. An MMM1 homodimer associates with one molecule of MDM12 on each side in a pairwise head-to-tail manner, and the SMP-LTD domains of MMM1 and MDM12 generate a continuous hydrophobic tunnel for phospholipid trafficking.

The protein resides in the mitochondrion outer membrane. The protein localises to the endoplasmic reticulum membrane. In terms of biological role, component of the ERMES/MDM complex, which serves as a molecular tether to connect the endoplasmic reticulum (ER) and mitochondria. Components of this complex are involved in the control of mitochondrial shape and protein biogenesis, and function in nonvesicular lipid trafficking between the ER and mitochondria. MDM12 is required for the interaction of the ER-resident membrane protein MMM1 and the outer mitochondrial membrane-resident beta-barrel protein MDM10. The MDM12-MMM1 subcomplex functions in the major beta-barrel assembly pathway that is responsible for biogenesis of all mitochondrial outer membrane beta-barrel proteins, and acts in a late step after the SAM complex. The MDM10-MDM12-MMM1 subcomplex further acts in the TOM40-specific pathway after the action of the MDM12-MMM1 complex. Essential for establishing and maintaining the structure of mitochondria and maintenance of mtDNA nucleoids. This Yarrowia lipolytica (strain CLIB 122 / E 150) (Yeast) protein is Mitochondrial distribution and morphology protein 12.